The chain runs to 292 residues: Glycine--tRNA ligase alpha subunit (292 aa).

This sequence belongs to the class-II aminoacyl-tRNA synthetase family. As to quaternary structure, tetramer of two alpha and two beta subunits.

The protein resides in the cytoplasm. The catalysed reaction is tRNA(Gly) + glycine + ATP = glycyl-tRNA(Gly) + AMP + diphosphate. This is Glycine--tRNA ligase alpha subunit from Syntrophus aciditrophicus (strain SB).